A 526-amino-acid polypeptide reads, in one-letter code: Tyrosine-protein kinase transforming protein Src (526 aa).

A disordered region spans residues 1 to 57 (MGSSKSKPKDPSQRRRSLEPPDSTHHGGFPASQTPNKTAAPDTHRTPSRSFGTVATE). Gly2 carries the N-myristoyl glycine; by host lipid modification. Over residues 7 to 25 (KPKDPSQRRRSLEPPDSTH) the composition is skewed to basic and acidic residues. An SH3 domain is found at 81 to 142 (GGVTTFVALY…PSNYVAPSDS (62 aa)). One can recognise an SH2 domain in the interval 148-245 (WYFGKITRRE…GLCHRLTNVC (98 aa)). A Protein kinase domain is found at 267 to 517 (LRLEVKLGQG…TFEYLQAQLL (251 aa)). Residues 273–281 (LGQGCFGEV) and Lys295 contribute to the ATP site. Asp386 serves as the catalytic Proton acceptor. Phosphotyrosine; by autocatalysis is present on Tyr416.

It belongs to the protein kinase superfamily. Tyr protein kinase family. SRC subfamily. In terms of assembly, homodimer. Post-translationally, the phosphorylated form is termed pp60v-src.

The enzyme catalyses L-tyrosyl-[protein] + ATP = O-phospho-L-tyrosyl-[protein] + ADP + H(+). Functionally, this phosphoprotein, required for both the initiation and the maintenance of neoplastic transformation, is a protein kinase that catalyzes the phosphorylation of tyrosine residues in vitro. Causes mitotic slippage in addition to cytokinesis failure in the host cell. Phosphorylates and attenuates the activity of host CDK1, possibly causing the mitotic slippage. In Rous sarcoma virus subgroup A (strain Schmidt-Ruppin) (RSV-SR-A), this protein is Tyrosine-protein kinase transforming protein Src (V-SRC).